The following is a 432-amino-acid chain: Serine hydroxymethyltransferase (432 aa).

(6S)-5,6,7,8-tetrahydrofolate-binding positions include Leu131 and 135–137; that span reads GHL. N6-(pyridoxal phosphate)lysine is present on Lys240.

This sequence belongs to the SHMT family. Homodimer. Pyridoxal 5'-phosphate serves as cofactor.

The protein localises to the cytoplasm. It catalyses the reaction (6R)-5,10-methylene-5,6,7,8-tetrahydrofolate + glycine + H2O = (6S)-5,6,7,8-tetrahydrofolate + L-serine. The protein operates within one-carbon metabolism; tetrahydrofolate interconversion. It participates in amino-acid biosynthesis; glycine biosynthesis; glycine from L-serine: step 1/1. Its function is as follows. Catalyzes the reversible interconversion of serine and glycine with tetrahydrofolate (THF) serving as the one-carbon carrier. This reaction serves as the major source of one-carbon groups required for the biosynthesis of purines, thymidylate, methionine, and other important biomolecules. Also exhibits THF-independent aldolase activity toward beta-hydroxyamino acids, producing glycine and aldehydes, via a retro-aldol mechanism. The protein is Serine hydroxymethyltransferase of Acidiphilium cryptum (strain JF-5).